The chain runs to 502 residues: MFRQAKWDEPLIFELSRSGRVGYTLPKPIEDVEIRVPEKLKRKSPLNLPELSEPEVVKHYTRLSGMNYGVDSGIYPLGSCTMKYNPKINEEIAGHPGVAYVHPYQDERTIQGALKIMWELEGWLKEITGMDRFTLQPAAGANGEFTGVMIIRAYHLDRGETQRTEMLVPDSAHGTNPASAAMAGFKVIEIPSNENGTVDLEALENAVSERTAGLMLTNPNTLGIFEDEILEIAKIVHKAGGLLYYDGANLNAVLGKIRPGDMGFDIVHLNLHKTFSTPHGGGGPGSGPVGVKDFLKDYLPVPLVGYDEESGRYYLDYNVPKSIGKVKELYGNFAVMVRALTYLKIMGRDGLKEASEIAVLNANYLTQKLKGTRGYELPHKELRKHEVVFSAEPMKKETGVKALDVAKRLLDFGLHAPTIYFPLIVHEALMIEPTETVSREELDAYVEALKRISEEAYSNPELVKSAPHNTAVKRVDDVLAAKRPIITWRMYRELKEKGEVDI.

N6-(pyridoxal phosphate)lysine is present on lysine 273.

It belongs to the GcvP family. C-terminal subunit subfamily. As to quaternary structure, the glycine cleavage system is composed of four proteins: P, T, L and H. In this organism, the P 'protein' is a heterodimer of two subunits. Pyridoxal 5'-phosphate serves as cofactor.

It catalyses the reaction N(6)-[(R)-lipoyl]-L-lysyl-[glycine-cleavage complex H protein] + glycine + H(+) = N(6)-[(R)-S(8)-aminomethyldihydrolipoyl]-L-lysyl-[glycine-cleavage complex H protein] + CO2. In terms of biological role, the glycine cleavage system catalyzes the degradation of glycine. The P protein binds the alpha-amino group of glycine through its pyridoxal phosphate cofactor; CO(2) is released and the remaining methylamine moiety is then transferred to the lipoamide cofactor of the H protein. The polypeptide is Probable glycine dehydrogenase (decarboxylating) subunit 2 (Thermococcus onnurineus (strain NA1)).